Consider the following 338-residue polypeptide: 1-aminocyclopropane-1-carboxylate deaminase (338 aa).

Residue Lys-51 is modified to N6-(pyridoxal phosphate)lysine. Ser-78 (nucleophile) is an active-site residue.

Belongs to the ACC deaminase/D-cysteine desulfhydrase family. As to quaternary structure, homotrimer. Pyridoxal 5'-phosphate is required as a cofactor.

It catalyses the reaction 1-aminocyclopropane-1-carboxylate + H2O = 2-oxobutanoate + NH4(+). Its function is as follows. Catalyzes a cyclopropane ring-opening reaction, the irreversible conversion of 1-aminocyclopropane-1-carboxylate (ACC) to ammonia and alpha-ketobutyrate. Allows growth on ACC as a nitrogen source. This Burkholderia ambifaria (strain MC40-6) protein is 1-aminocyclopropane-1-carboxylate deaminase.